Consider the following 224-residue polypeptide: MDDDAQMVAIDKDQLARMRGEYGPEKDGCGDLDFDWLDDGWLTLLRRWLNDAQRAGVSEPNAMVLATVADGKPVTRSVLCKILDESGVAFFTSYTSAKGEQLAVTPYASATFPWYQLGRQAHVQGPVSKVSTEEIFTYWSMRPRGAQLGAWASQQSRPVGSRAQLDNQLAEVTRRFADQDQIPVPPGWGGYRIAPEIVEFWQGRENRMHNRIRVANGRLERLQP.

Residues arginine 19 to tyrosine 22 and lysine 81 contribute to the substrate site. Residues arginine 76–lysine 81, phenylalanine 91–threonine 92, lysine 98, and glutamine 120 each bind FMN. 2 residues coordinate substrate: tyrosine 138 and arginine 142. FMN is bound by residues glutamine 155 to serine 156 and tryptophan 201. Arginine 207 to histidine 209 lines the substrate pocket. Arginine 211 contacts FMN.

The protein belongs to the pyridoxamine 5'-phosphate oxidase family. Homodimer. FMN is required as a cofactor.

It catalyses the reaction pyridoxamine 5'-phosphate + O2 + H2O = pyridoxal 5'-phosphate + H2O2 + NH4(+). The catalysed reaction is pyridoxine 5'-phosphate + O2 = pyridoxal 5'-phosphate + H2O2. The protein operates within cofactor metabolism; pyridoxal 5'-phosphate salvage; pyridoxal 5'-phosphate from pyridoxamine 5'-phosphate: step 1/1. It functions in the pathway cofactor metabolism; pyridoxal 5'-phosphate salvage; pyridoxal 5'-phosphate from pyridoxine 5'-phosphate: step 1/1. Catalyzes the oxidation of either pyridoxine 5'-phosphate (PNP) or pyridoxamine 5'-phosphate (PMP) into pyridoxal 5'-phosphate (PLP). This Mycobacterium bovis (strain ATCC BAA-935 / AF2122/97) protein is Pyridoxine/pyridoxamine 5'-phosphate oxidase.